We begin with the raw amino-acid sequence, 264 residues long: tRNA (guanine-N(1)-)-methyltransferase (264 aa).

Residues G113 and 133-138 contribute to the S-adenosyl-L-methionine site; that span reads IGDYVL. The interval 244 to 264 is disordered; that stretch reads VQQAATPGGQRRPPWHRDSRA.

The protein belongs to the RNA methyltransferase TrmD family. In terms of assembly, homodimer.

The protein localises to the cytoplasm. It carries out the reaction guanosine(37) in tRNA + S-adenosyl-L-methionine = N(1)-methylguanosine(37) in tRNA + S-adenosyl-L-homocysteine + H(+). Functionally, specifically methylates guanosine-37 in various tRNAs. The chain is tRNA (guanine-N(1)-)-methyltransferase from Frankia alni (strain DSM 45986 / CECT 9034 / ACN14a).